The following is a 141-amino-acid chain: 3-hydroxyacyl-[acyl-carrier-protein] dehydratase FabZ (141 aa).

The active site involves histidine 47.

This sequence belongs to the thioester dehydratase family. FabZ subfamily.

It is found in the cytoplasm. It carries out the reaction a (3R)-hydroxyacyl-[ACP] = a (2E)-enoyl-[ACP] + H2O. Involved in unsaturated fatty acids biosynthesis. Catalyzes the dehydration of short chain beta-hydroxyacyl-ACPs and long chain saturated and unsaturated beta-hydroxyacyl-ACPs. The sequence is that of 3-hydroxyacyl-[acyl-carrier-protein] dehydratase FabZ from Caldanaerobacter subterraneus subsp. tengcongensis (strain DSM 15242 / JCM 11007 / NBRC 100824 / MB4) (Thermoanaerobacter tengcongensis).